The chain runs to 932 residues: DNA mismatch repair protein MutS (932 aa).

615–622 (GPNMAGKS) serves as a coordination point for ATP.

Belongs to the DNA mismatch repair MutS family.

In terms of biological role, this protein is involved in the repair of mismatches in DNA. It is possible that it carries out the mismatch recognition step. This protein has a weak ATPase activity. This Clostridium botulinum (strain Kyoto / Type A2) protein is DNA mismatch repair protein MutS.